The primary structure comprises 1397 residues: Centlein (1397 aa).

2 disordered regions span residues 1–43 and 56–76; these read MAAR…GLAG and LWRGEEGSGGRRGSGRAGAAV. Position 2 is an N-acetylalanine (Ala-2). Phosphoserine is present on residues Ser-5, Ser-9, and Ser-22. Coiled-coil stretches lie at residues 95 to 126 and 405 to 481; these read EEAKATRSQLLEEELSSLKEELALCQADKEFV and VVNL…KLMA. Disordered stretches follow at residues 422–449 and 485–521; these read LKEKLEESQGTAPSLSPHDSDSSHSGKA and CDQDFSEKGTEGKHKEPPVKRSRSLSPKSSFMGSEEL. Residues 485–503 are compositionally biased toward basic and acidic residues; the sequence is CDQDFSEKGTEGKHKEPPV. Coiled coils occupy residues 674–778, 973–1114, and 1152–1299; these read KNEK…KALR, ISLR…MELL, and SESN…LKKM. Position 1219 is a phosphoserine (Ser-1219). Phosphothreonine is present on Thr-1334.

As to quaternary structure, interacts with CEP250 and CEP68. Interacts with NEK2; the interaction leads to phosphorylation of CNTLN. In terms of processing, phosphorylated directly or indirectly by NEK2.

The protein localises to the cytoplasm. Its subcellular location is the cytoskeleton. The protein resides in the microtubule organizing center. It is found in the centrosome. It localises to the centriole. Required for centrosome cohesion and recruitment of CEP68 to centrosomes. This is Centlein from Mus musculus (Mouse).